Reading from the N-terminus, the 568-residue chain is Phosphoprotein (568 aa).

2 disordered regions span residues 1-23 (MDQD…GGRE) and 38-320 (SEPT…GIGE). Residues 7 to 20 (ILKEDSEVEREAPG) show a composition bias toward basic and acidic residues. Positions 33-41 (DAVLSSEPT) are N0 binding. The segment covering 50–59 (LHNTINTPQG) has biased composition (polar residues). A Phosphoserine; by host modification is found at Ser68. Positions 83-101 (RSGEESRVSGRTSKPEAEA) are enriched in basic and acidic residues. Ser125 carries the post-translational modification Phosphoserine; by host. Positions 150-168 (GIEDENREMAAHPDKRGED) are enriched in basic and acidic residues. A compositionally biased stretch (polar residues) spans 191-206 (ASNNGRSMEPGSSHSA). A phosphoserine; by host mark is found at Ser192, Ser249, Ser257, and Ser260. Multimerization regions lie at residues 344–411 (FESS…KRFS) and 362–432 (ANYA…HIIT). The segment at 345–412 (ESSRDASYVF…FRDIYKRFSE (68 aa)) is bipartite nucleocapsid binding domain 1. Positions 364-429 (YAEMTFNVCG…LLMSNLSTLH (66 aa)) form a coiled coil. L protein binding stretches follow at residues 412-445 (EYQK…DSLT) and 413-445 (YQKE…DSLT). Residues Ser447 and Ser449 each carry the phosphoserine; by host modification. A bipartite nucleocapsid binding domain 2 region spans residues 479–568 (DLIREDEFRD…VEEDIESLTN (90 aa)). The tract at residues 479–568 (DLIREDEFRD…VEEDIESLTN (90 aa)) is interaction with the nucleocapsid (N-RNA). The interval 495 to 516 (YQERDTEPRASNASRLLPSKEK) is disordered. The tract at residues 547-566 (KTDQEVKAVMELVEEDIESL) is formation of N-RNA complex involved in transcription and replication.

This sequence belongs to the respirovirus P protein family. Homotetramer. Interacts (via multimerization domain) with polymerase L; this interaction forms the polymerase complex. Interacts (via N-terminus) with N0; this interaction allows P to chaperon N0 before encapsidation and form the N-P complex. Interacts (via C-terminus) with N-RNA template; this interaction positions the polymerase on the template. Phosphorylated by PKC/PRKCZ, and other unknown kinases. Phosphorylation is necessary for viral transcription and replication. The N-terminus contains the majority of phosphorylated sites. Ser-249 is the major site of phosphorylation, but is not necessary for most functions.

Its subcellular location is the host cytoplasm. In terms of biological role, essential cofactor of the RNA polymerase L that plays a central role in the transcription and replication by forming the polymerase complex with RNA polymerase L and recruiting L to the genomic N-RNA template for RNA synthesis. Also plays a central role in the encapsidation of nascent RNA chains by forming the encapsidation complex with the nucleocapsid protein N (N-P complex). Acts as a chaperone for newly synthesized free N protein, so-called N0, allowing encapsidation of nascent RNA chains during replication. The nucleoprotein protein N prevents excessive phosphorylation of P, which leads to down-regulation of viral transcription/ replication. Participates, together with N, in the formation of viral factories (viroplasms), which are large inclusions in the host cytoplasm where replication takes place. Recruits host PI4KB and remodel the host endoplasmic reticulum membrane to form viral replication factories. The protein is Phosphoprotein (P/V/C) of Sendai virus (strain Fushimi) (SeV).